The primary structure comprises 332 residues: Small ribosomal subunit biogenesis GTPase RsgA (332 aa).

The 157-residue stretch at 103–259 (RQQLIAANLD…LIDTPGMREL (157 aa)) folds into the CP-type G domain. GTP is bound by residues 148–151 (TKVD) and 201–209 (GSSGAGKST). Positions 281, 286, 288, and 294 each coordinate Zn(2+).

Belongs to the TRAFAC class YlqF/YawG GTPase family. RsgA subfamily. As to quaternary structure, monomer. Associates with 30S ribosomal subunit, binds 16S rRNA. It depends on Zn(2+) as a cofactor.

The protein resides in the cytoplasm. Its function is as follows. One of several proteins that assist in the late maturation steps of the functional core of the 30S ribosomal subunit. Helps release RbfA from mature subunits. May play a role in the assembly of ribosomal proteins into the subunit. Circularly permuted GTPase that catalyzes slow GTP hydrolysis, GTPase activity is stimulated by the 30S ribosomal subunit. The chain is Small ribosomal subunit biogenesis GTPase RsgA from Xylella fastidiosa (strain M23).